Reading from the N-terminus, the 253-residue chain is uncharacterized protein (253 aa).

Over residues 175 to 184 (NPTQTSPGKP) the composition is skewed to polar residues. Positions 175–253 (NPTQTSPGKP…ATENEDRLPS (79 aa)) are disordered. At serine 180 the chain carries Phosphoserine. Composition is skewed to low complexity over residues 185–196 (STSESSQTDTST) and 203–214 (TPTTTRASSYTT). Polar residues predominate over residues 215–242 (LVSTSNQVSNEAEASAVETSANQAQNTE).

It belongs to the TRAPP small subunits family. BET3 subfamily.

This is an uncharacterized protein from Schizosaccharomyces pombe (strain 972 / ATCC 24843) (Fission yeast).